The chain runs to 51 residues: Large ribosomal subunit protein eL39 (51 aa).

Residues 1-15 (MAAKKSFKIKQKLAK) show a composition bias toward basic residues. Positions 1-21 (MAAKKSFKIKQKLAKAKNQNR) are disordered.

It belongs to the eukaryotic ribosomal protein eL39 family. In terms of assembly, interacts with YIH1.

The polypeptide is Large ribosomal subunit protein eL39 (RPL39) (Eremothecium gossypii (strain ATCC 10895 / CBS 109.51 / FGSC 9923 / NRRL Y-1056) (Yeast)).